Consider the following 269-residue polypeptide: 5'-nucleotidase SurE (269 aa).

4 residues coordinate a divalent metal cation: aspartate 11, aspartate 12, serine 43, and asparagine 101.

The protein belongs to the SurE nucleotidase family. It depends on a divalent metal cation as a cofactor.

It localises to the cytoplasm. The enzyme catalyses a ribonucleoside 5'-phosphate + H2O = a ribonucleoside + phosphate. Nucleotidase that shows phosphatase activity on nucleoside 5'-monophosphates. The chain is 5'-nucleotidase SurE from Prochlorococcus marinus (strain MIT 9301).